The chain runs to 700 residues: Polyphosphate kinase (700 aa).

Asparagine 45 contacts ATP. Residues arginine 373 and arginine 403 each contribute to the Mg(2+) site. One can recognise a PLD phosphodiesterase 1 domain in the interval proline 428–threonine 462. Residue histidine 433 is the Phosphohistidine intermediate of the active site. Residues tyrosine 466, arginine 562, and histidine 590 each coordinate ATP. In terms of domain architecture, PLD phosphodiesterase 2 spans aspartate 585–asparagine 615.

This sequence belongs to the polyphosphate kinase 1 (PPK1) family. Requires Mg(2+) as cofactor. In terms of processing, an intermediate of this reaction is the autophosphorylated ppk in which a phosphate is covalently linked to a histidine residue through a N-P bond.

The enzyme catalyses [phosphate](n) + ATP = [phosphate](n+1) + ADP. Catalyzes the reversible transfer of the terminal phosphate of ATP to form a long-chain polyphosphate (polyP). The polypeptide is Polyphosphate kinase (Vibrio vulnificus (strain CMCP6)).